A 103-amino-acid chain; its full sequence is Integration host factor subunit beta (103 aa).

It belongs to the bacterial histone-like protein family. As to quaternary structure, heterodimer of an alpha and a beta chain.

In terms of biological role, this protein is one of the two subunits of integration host factor, a specific DNA-binding protein that functions in genetic recombination as well as in transcriptional and translational control. This is Integration host factor subunit beta from Bradyrhizobium sp. (strain BTAi1 / ATCC BAA-1182).